A 79-amino-acid chain; its full sequence is UPF0154 protein llmg_1186 (79 aa).

A helical membrane pass occupies residues 4–24; sequence ILAILLMVVCLLAGFFLGTWF.

The protein belongs to the UPF0154 family.

The protein resides in the cell membrane. This Lactococcus lactis subsp. cremoris (strain MG1363) protein is UPF0154 protein llmg_1186.